The chain runs to 281 residues: Pantothenate synthetase (281 aa).

An ATP-binding site is contributed by 30-37; that stretch reads MGALHRGH. The Proton donor role is filled by His-37. Residue Gln-61 participates in (R)-pantoate binding. Gln-61 lines the beta-alanine pocket. 147–150 is an ATP binding site; it reads GEKD. Gln-153 serves as a coordination point for (R)-pantoate. ATP contacts are provided by residues Ile-176 and 184–187; that span reads LSSR.

Belongs to the pantothenate synthetase family. Homodimer.

The protein localises to the cytoplasm. The enzyme catalyses (R)-pantoate + beta-alanine + ATP = (R)-pantothenate + AMP + diphosphate + H(+). Its pathway is cofactor biosynthesis; (R)-pantothenate biosynthesis; (R)-pantothenate from (R)-pantoate and beta-alanine: step 1/1. Functionally, catalyzes the condensation of pantoate with beta-alanine in an ATP-dependent reaction via a pantoyl-adenylate intermediate. The protein is Pantothenate synthetase of Porphyromonas gingivalis (strain ATCC BAA-308 / W83).